A 400-amino-acid chain; its full sequence is Formate-dependent phosphoribosylglycinamide formyltransferase (400 aa).

N(1)-(5-phospho-beta-D-ribosyl)glycinamide-binding positions include 21–22 (EL) and glutamate 81. Residues arginine 114, lysine 155, 160-165 (SSGKGQ), 195-198 (EGRI), and glutamate 203 each bind ATP. One can recognise an ATP-grasp domain in the interval 119–313 (RLAAEKLGLP…EFELHVRAIL (195 aa)). The Mg(2+) site is built by glutamate 272 and glutamate 284. N(1)-(5-phospho-beta-D-ribosyl)glycinamide contacts are provided by residues aspartate 291, lysine 360, and 367-368 (RR).

The protein belongs to the PurK/PurT family. As to quaternary structure, homodimer.

It carries out the reaction N(1)-(5-phospho-beta-D-ribosyl)glycinamide + formate + ATP = N(2)-formyl-N(1)-(5-phospho-beta-D-ribosyl)glycinamide + ADP + phosphate + H(+). Its pathway is purine metabolism; IMP biosynthesis via de novo pathway; N(2)-formyl-N(1)-(5-phospho-D-ribosyl)glycinamide from N(1)-(5-phospho-D-ribosyl)glycinamide (formate route): step 1/1. Its function is as follows. Involved in the de novo purine biosynthesis. Catalyzes the transfer of formate to 5-phospho-ribosyl-glycinamide (GAR), producing 5-phospho-ribosyl-N-formylglycinamide (FGAR). Formate is provided by PurU via hydrolysis of 10-formyl-tetrahydrofolate. The chain is Formate-dependent phosphoribosylglycinamide formyltransferase from Methylococcus capsulatus (strain ATCC 33009 / NCIMB 11132 / Bath).